Reading from the N-terminus, the 160-residue chain is Transcription elongation factor GreA (160 aa).

The stretch at Ser49–Ala75 forms a coiled coil.

The protein belongs to the GreA/GreB family.

Its function is as follows. Necessary for efficient RNA polymerase transcription elongation past template-encoded arresting sites. The arresting sites in DNA have the property of trapping a certain fraction of elongating RNA polymerases that pass through, resulting in locked ternary complexes. Cleavage of the nascent transcript by cleavage factors such as GreA or GreB allows the resumption of elongation from the new 3'terminus. GreA releases sequences of 2 to 3 nucleotides. The protein is Transcription elongation factor GreA of Clostridium beijerinckii (strain ATCC 51743 / NCIMB 8052) (Clostridium acetobutylicum).